A 631-amino-acid chain; its full sequence is Sperm-associated antigen 16 protein (631 aa).

Residues 152–267 are a coiled coil; that stretch reads DVYTQIMLLE…LQETLKKLQR (116 aa). Residues 266-332 form a disordered region; that stretch reads QRGHSYHGPQ…QPNPNLNVSK (67 aa). 2 stretches are compositionally biased toward basic and acidic residues: residues 277 to 287 and 295 to 304; these read KVDHSREKENA and GLREAREQNK. WD repeat units lie at residues 350 to 389, 392 to 431, 434 to 473, 476 to 515, 518 to 557, 560 to 600, and 601 to 630; these read LHELPVSCVSMQPHKDILVSCGEDRLWKVLGLPKCNVLLT, GHTDWLSDCCFHPSGDKLATSSGDTTVKLWDLCKGDCILT, GHSRAVWSCTWHSCGNFVASSSLDKTSKIWDVNSERCRCT, GHTDSVNSIEFFPFSNTLLTSSADKTLSIWDARTGICEQS, GHMHSINDAIFDPRGHMIASCDACGVTKLWDFRKLLPIVS, IGPS…HKLM, and GHENEAHTVVFSHDGEILFSGGSDGTVRTW.

In terms of assembly, interacts with SPAG6 and STK36. In terms of processing, phosphorylated by TSSK2. As to expression, isoform 1 is detected in testis. Isoform 4 is detected in testis and brain, and at lower levels in kidney, heart, pancreas, thyroid, ovary, adrenal gland, spinal cord, trachea and liver.

The protein resides in the cytoplasm. It is found in the cytoskeleton. Its subcellular location is the flagellum axoneme. It localises to the cilium axoneme. The protein localises to the cell projection. The protein resides in the cilium. It is found in the flagellum. Its function is as follows. Necessary for sperm flagellar function. Plays a role in motile ciliogenesis. May help to recruit STK36 to the cilium or apical surface of the cell to initiate subsequent steps of construction of the central pair apparatus of motile cilia. This is Sperm-associated antigen 16 protein (SPAG16) from Homo sapiens (Human).